Reading from the N-terminus, the 293-residue chain is Glycine--tRNA ligase alpha subunit (293 aa).

Belongs to the class-II aminoacyl-tRNA synthetase family. As to quaternary structure, tetramer of two alpha and two beta subunits.

Its subcellular location is the cytoplasm. The catalysed reaction is tRNA(Gly) + glycine + ATP = glycyl-tRNA(Gly) + AMP + diphosphate. This chain is Glycine--tRNA ligase alpha subunit, found in Acaryochloris marina (strain MBIC 11017).